The sequence spans 263 residues: tRNA pseudouridine synthase A (263 aa).

Catalysis depends on Asp-73, which acts as the Nucleophile. Tyr-131 lines the substrate pocket.

It belongs to the tRNA pseudouridine synthase TruA family. In terms of assembly, homodimer.

It catalyses the reaction uridine(38/39/40) in tRNA = pseudouridine(38/39/40) in tRNA. In terms of biological role, formation of pseudouridine at positions 38, 39 and 40 in the anticodon stem and loop of transfer RNAs. The polypeptide is tRNA pseudouridine synthase A (Mycoplasmoides gallisepticum (strain R(low / passage 15 / clone 2)) (Mycoplasma gallisepticum)).